The following is a 324-amino-acid chain: MIFSKISQVAHYVPQQLVTNNDLASIMDTSHEWIFSRTGIAERHISRDEMTSDLAIQVADQLLTQSGLKADAIDFIIVATISPDATMPSTAAKVQAAIAATSAFAFDMTAACSGFVFALAMADKLIASGAYQNGMVIGAETLSKLVNWQDRATAVLFGDGAGGVLLEASKDKHVLAETLHTDGARCQSLISGETSLSSPYSIGKKAIATIQMDGRAIFDFAIRDVSKSILTLMAQSDITKDDIDYCLLHQANRRILDKIARKIDVPRGKFLENMMRYGNTSAASIPILLSEAVQKGQIRLDGTQKILLSGFGGGLTWGSLIVKI.

Residues Cys-112 and His-249 contribute to the active site. The ACP-binding stretch occupies residues 250-254; that stretch reads QANRR. Residue Asn-279 is part of the active site.

It belongs to the thiolase-like superfamily. FabH family. In terms of assembly, homodimer.

It is found in the cytoplasm. The enzyme catalyses malonyl-[ACP] + acetyl-CoA + H(+) = 3-oxobutanoyl-[ACP] + CO2 + CoA. It participates in lipid metabolism; fatty acid biosynthesis. In terms of biological role, catalyzes the condensation reaction of fatty acid synthesis by the addition to an acyl acceptor of two carbons from malonyl-ACP. Catalyzes the first condensation reaction which initiates fatty acid synthesis and may therefore play a role in governing the total rate of fatty acid production. Possesses both acetoacetyl-ACP synthase and acetyl transacylase activities. Its substrate specificity determines the biosynthesis of branched-chain and/or straight-chain of fatty acids. This Streptococcus pyogenes serotype M2 (strain MGAS10270) protein is Beta-ketoacyl-[acyl-carrier-protein] synthase III.